A 346-amino-acid polypeptide reads, in one-letter code: 4-hydroxy-2-oxovalerate aldolase (346 aa).

The 253-residue stretch at valine 8–glutamine 260 folds into the Pyruvate carboxyltransferase domain. Arginine 16 to aspartate 17 serves as a coordination point for substrate. Position 17 (aspartate 17) interacts with Mn(2+). Histidine 20 acts as the Proton acceptor in catalysis. Substrate is bound by residues serine 170 and histidine 199. Mn(2+)-binding residues include histidine 199 and histidine 201. Position 290 (tyrosine 290) interacts with substrate.

The protein belongs to the 4-hydroxy-2-oxovalerate aldolase family.

It catalyses the reaction (S)-4-hydroxy-2-oxopentanoate = acetaldehyde + pyruvate. This chain is 4-hydroxy-2-oxovalerate aldolase, found in Polaromonas naphthalenivorans (strain CJ2).